The following is a 319-amino-acid chain: tRNA (guanine-N(7)-)-methyltransferase (319 aa).

The tract at residues 1–44 (MSESPETPEPSPAQSPEAAPEQPQAARPVTPGSQASFGTYGGRP) is disordered. Residues 14–26 (QSPEAAPEQPQAA) are compositionally biased toward low complexity. Positions 103, 128, 155, and 178 each coordinate S-adenosyl-L-methionine. Asp178 is an active-site residue. Residues Lys182 and Asp214 each contribute to the substrate site. Positions 262-288 (APVKEGRAPVSTEHTGPNEGVDETGGW) are disordered. 298-301 (TSFE) serves as a coordination point for substrate.

The protein belongs to the class I-like SAM-binding methyltransferase superfamily. TrmB family.

It carries out the reaction guanosine(46) in tRNA + S-adenosyl-L-methionine = N(7)-methylguanosine(46) in tRNA + S-adenosyl-L-homocysteine. It participates in tRNA modification; N(7)-methylguanine-tRNA biosynthesis. Functionally, catalyzes the formation of N(7)-methylguanine at position 46 (m7G46) in tRNA. This is tRNA (guanine-N(7)-)-methyltransferase from Arthrobacter sp. (strain FB24).